The sequence spans 432 residues: Adenylosuccinate synthetase (432 aa).

Residues Gly13–Lys19 and Gly41–Thr43 contribute to the GTP site. Catalysis depends on Asp14, which acts as the Proton acceptor. Asp14 and Gly41 together coordinate Mg(2+). IMP is bound by residues Asp14–Lys17, Asn39–His42, Thr130, Arg144, Gln225, Thr240, and Arg304. The active-site Proton donor is His42. Position 300-306 (Ala300–Arg306) interacts with substrate. GTP contacts are provided by residues Arg306, Lys332 to Asp334, and Ser415 to Gly417.

This sequence belongs to the adenylosuccinate synthetase family. In terms of assembly, homodimer. Mg(2+) serves as cofactor.

Its subcellular location is the cytoplasm. The enzyme catalyses IMP + L-aspartate + GTP = N(6)-(1,2-dicarboxyethyl)-AMP + GDP + phosphate + 2 H(+). It participates in purine metabolism; AMP biosynthesis via de novo pathway; AMP from IMP: step 1/2. Plays an important role in the de novo pathway of purine nucleotide biosynthesis. Catalyzes the first committed step in the biosynthesis of AMP from IMP. In Cronobacter sakazakii (strain ATCC BAA-894) (Enterobacter sakazakii), this protein is Adenylosuccinate synthetase.